We begin with the raw amino-acid sequence, 365 residues long: Ribosomal RNA large subunit methyltransferase M (365 aa).

Residues serine 187, 220-223, aspartate 239, aspartate 259, and aspartate 276 each bind S-adenosyl-L-methionine; that span reads CPGG. Residue lysine 305 is the Proton acceptor of the active site.

The protein belongs to the class I-like SAM-binding methyltransferase superfamily. RNA methyltransferase RlmE family. RlmM subfamily. As to quaternary structure, monomer.

The protein resides in the cytoplasm. The enzyme catalyses cytidine(2498) in 23S rRNA + S-adenosyl-L-methionine = 2'-O-methylcytidine(2498) in 23S rRNA + S-adenosyl-L-homocysteine + H(+). Its function is as follows. Catalyzes the 2'-O-methylation at nucleotide C2498 in 23S rRNA. The sequence is that of Ribosomal RNA large subunit methyltransferase M from Psychromonas ingrahamii (strain DSM 17664 / CCUG 51855 / 37).